A 255-amino-acid chain; its full sequence is HLA class II histocompatibility antigen, DQ alpha 2 chain (255 aa).

The first 23 residues, 1-23, serve as a signal peptide directing secretion; sequence MILNKALLLGALALTAVMSPCGG. The interval 24 to 110 is alpha-1; sequence EDIVADHVAS…RQSNSTAATN (87 aa). Residues 24-217 lie on the Extracellular side of the membrane; sequence EDIVADHVAS…IPAPMSELTE (194 aa). 2 N-linked (GlcNAc...) asparagine glycosylation sites follow: asparagine 104 and asparagine 144. An alpha-2 region spans residues 111–204; it reads EVPEVTVFSK…GLDEPLLKHW (94 aa). An Ig-like C1-type domain is found at 113–205; sequence PEVTVFSKFP…LDEPLLKHWE (93 aa). Cysteine 133 and cysteine 189 are joined by a disulfide. The connecting peptide stretch occupies residues 205–217; that stretch reads EPEIPAPMSELTE. The chain crosses the membrane as a helical span at residues 218–240; the sequence is TLVCALGLSVGLMGIVVGTVFII. Residues 241–255 lie on the Cytoplasmic side of the membrane; the sequence is QGLRSVGASRHQGLL.

The protein belongs to the MHC class II family. Heterodimer of an alpha and a beta subunit; also referred as MHC class II molecule. Dimer formation with HLA-DQB2, but not with HLA-DQB1, is required for efficient exit from the endoplasmic reticulum (ER). In the ER, forms a heterononamer; 3 MHC class II molecules bind to a CD74 homotrimer (also known as invariant chain or HLA class II histocompatibility antigen gamma chain). In the endosomal/lysosomal system; CD74 undergoes sequential degradation by various proteases; leaving a small fragment termed CLIP on each MHC class II molecule. MHC class II molecule interacts with HLA_DM, and HLA_DO in B-cells, in order to release CLIP and facilitate the binding of antigenic peptides. Association with HLA-DMA also occurs in skin Langerhans cells, in post-Golgi compartments. As to expression, restricted to skin Langerhans cells, although some expression at low levels may occur at the surface of B lymphoblastoid cells.

The protein localises to the cell membrane. It localises to the endoplasmic reticulum membrane. Its subcellular location is the golgi apparatus. The protein resides in the trans-Golgi network membrane. It is found in the endosome membrane. The protein localises to the lysosome membrane. Functionally, binds peptides derived from antigens that access the endocytic route of antigen presenting cells (APC) and presents them on the cell surface for recognition by the CD4 T-cells. The peptide binding cleft accommodates peptides of 10-30 residues. The peptides presented by MHC class II molecules are generated mostly by degradation of proteins that access the endocytic route, where they are processed by lysosomal proteases and other hydrolases. Exogenous antigens that have been endocytosed by the APC are thus readily available for presentation via MHC II molecules, and for this reason this antigen presentation pathway is usually referred to as exogenous. As membrane proteins on their way to degradation in lysosomes as part of their normal turn-over are also contained in the endosomal/lysosomal compartments, exogenous antigens must compete with those derived from endogenous components. Autophagy is also a source of endogenous peptides, autophagosomes constitutively fuse with MHC class II loading compartments. In addition to APCs, other cells of the gastrointestinal tract, such as epithelial cells, express MHC class II molecules and CD74 and act as APCs, which is an unusual trait of the GI tract. To produce a MHC class II molecule that presents an antigen, three MHC class II molecules (heterodimers of an alpha and a beta chain) associate with a CD74 trimer in the ER to form a heterononamer. Soon after the entry of this complex into the endosomal/lysosomal system where antigen processing occurs, CD74 undergoes a sequential degradation by various proteases, including CTSS and CTSL, leaving a small fragment termed CLIP (class-II-associated invariant chain peptide). The removal of CLIP is facilitated by HLA-DM via direct binding to the alpha-beta-CLIP complex so that CLIP is released. HLA-DM stabilizes MHC class II molecules until primary high affinity antigenic peptides are bound. The MHC II molecule bound to a peptide is then transported to the cell membrane surface. In B-cells, the interaction between HLA-DM and MHC class II molecules is regulated by HLA-DO. Primary dendritic cells (DCs) also to express HLA-DO. Lysosomal microenvironment has been implicated in the regulation of antigen loading into MHC II molecules, increased acidification produces increased proteolysis and efficient peptide loading. The polypeptide is HLA class II histocompatibility antigen, DQ alpha 2 chain (HLA-DQA2) (Homo sapiens (Human)).